The primary structure comprises 295 residues: Bifunctional protein FolD (295 aa).

NADP(+) is bound by residues 166-168, serine 191, and isoleucine 232; that span reads GRS.

The protein belongs to the tetrahydrofolate dehydrogenase/cyclohydrolase family. In terms of assembly, homodimer.

The enzyme catalyses (6R)-5,10-methylene-5,6,7,8-tetrahydrofolate + NADP(+) = (6R)-5,10-methenyltetrahydrofolate + NADPH. It catalyses the reaction (6R)-5,10-methenyltetrahydrofolate + H2O = (6R)-10-formyltetrahydrofolate + H(+). It participates in one-carbon metabolism; tetrahydrofolate interconversion. In terms of biological role, catalyzes the oxidation of 5,10-methylenetetrahydrofolate to 5,10-methenyltetrahydrofolate and then the hydrolysis of 5,10-methenyltetrahydrofolate to 10-formyltetrahydrofolate. The chain is Bifunctional protein FolD from Wolbachia pipientis subsp. Culex pipiens (strain wPip).